Here is a 45-residue protein sequence, read N- to C-terminus: MEKAMQLSHGIGYEEYGRRLETRMKVERQRELDYEKSKRISAGAY.

This is an uncharacterized protein from Bacillus subtilis (strain 168).